The sequence spans 566 residues: MTKKLTPQEKKNRKPAVRACVFCHQKHLQCSNERPCKNCVKRNIAHGCQDIVRKRVKYLTGEGVPGAVSNKQSTPRKKLKTSPVSTSVSPMDSVKSELATPVESSNHFPPPMSSSVDALPTTQHSAIEIPPNDQPISDILEVPPLFDSSHMISSEAPETNITLTTQNLITPDPLSFHTNTVSNTTTDVLNKLLNDNYETESILSANNSNGDHLLGMAHTSSGHLSNGQQFQSNYLNEEYMMLGDIILQSKQASPSPSNTSTSENNTNTLSPSSFGYISNINFEDFNQPKRKVVQKLKDSRPFISLGFTADLAPHDNNNNTDYYDDKMTNNITGKTEEGPGNPIINYNTKFTTDYVPPSITNNLYKTASDLYSKELKNFYYPLSYHALTKLLKVIFGGNDLSPEEKQEKRSKLLIILKLIASYRPTFIAAHRDLIQEDLLMLEMTLQRSLLDYKKLAELNSSPTIMWRRTGEIISITEDMALLLEHSSFDLLKERRFIFELMDDNSIVDYFNLFANIAVGNLKSVIQTAIQMKTKSSNLIKFTCVFTIKRDIFDIPMIVIGQFLPIV.

The zn(2)-C6 fungal-type DNA-binding region spans 20–48 (CVFCHQKHLQCSNERPCKNCVKRNIAHGC). Disordered stretches follow at residues 63-92 (GVPG…SPMD) and 250-270 (KQAS…NTLS). Residues 253–270 (SPSPSNTSTSENNTNTLS) are compositionally biased toward low complexity.

It belongs to the ERT1/acuK family.

It is found in the nucleus. In terms of biological role, transcription factor which regulates nonfermentable carbon utilization. This chain is Glucose starvation modulator protein 1 (GSM1), found in Candida albicans (strain WO-1) (Yeast).